A 471-amino-acid polypeptide reads, in one-letter code: Putative multidrug resistance protein MdtD (471 aa).

Topologically, residues 1 to 11 (MTDLPDSTRWQ) are periplasmic. The helical transmembrane segment at 12 to 32 (LWIVAFGFFMQSLDTTIVNTA) threads the bilayer. Residues 33–48 (LPSMAQSLGESPLHMH) are Cytoplasmic-facing. A helical transmembrane segment spans residues 49 to 69 (MVIVSYVLTVAVMLPASGWLA). Residues 70-76 (DKVGVRN) lie on the Periplasmic side of the membrane. Residues 77–97 (IFFTAIVLFTLGSLFCALSGT) form a helical membrane-spanning segment. Topologically, residues 98-101 (LNEL) are cytoplasmic. Residues 102 to 124 (LLARALQGVGGAMMVPVGRLTVM) form a helical membrane-spanning segment. The Periplasmic portion of the chain corresponds to 125–137 (KIVPREQYMAAMT). The chain crosses the membrane as a helical span at residues 138 to 158 (FVTLPGQVGPLLGPALGGLLV). Topologically, residues 159 to 164 (EYASWH) are cytoplasmic. The chain crosses the membrane as a helical span at residues 165-185 (WIFLINIPVGIIGAIATLMLM). The Periplasmic segment spans residues 186-196 (PNYTMQTRRFD). The helical transmembrane segment at 197-217 (LSGFLLLAVGMAVLTLALDGS) threads the bilayer. Residues 218–224 (KGTGLSP) are Cytoplasmic-facing. A helical membrane pass occupies residues 225–245 (LAIAGLVAVGVVALVLYLLHA). Residues 246–262 (RNNNRALFSLKLFRTRT) lie on the Periplasmic side of the membrane. A helical transmembrane segment spans residues 263-283 (FSLGLAGSFAGRIGSGMLPFM). The Cytoplasmic segment spans residues 284-285 (TP). A helical transmembrane segment spans residues 286–306 (VFLQIGLGFSPFHAGLMMIPM). The Periplasmic portion of the chain corresponds to 307–341 (VLGSMGMKRIVVQVVNRFGYRRVLVATTLGLSLVT). The chain crosses the membrane as a helical span at residues 342–362 (LLFMTTALLGWYYVLPFVLFL). Topologically, residues 363–395 (QGMVNSTRFSSMNTLTLKDLPDNLASSGNSLLS) are cytoplasmic. Residues 396 to 416 (MIMQLSMSIGVTIAGLLLGLF) form a helical membrane-spanning segment. Residues 417–430 (GSQHISVDSGTTQT) lie on the Periplasmic side of the membrane. Residues 431–451 (VFMYTWLSMAFIIALPAFIFA) form a helical membrane-spanning segment. Residues 452–471 (RVPNDTHQNVAISRRKRSAQ) lie on the Cytoplasmic side of the membrane.

Belongs to the major facilitator superfamily. TCR/Tet family.

Its subcellular location is the cell inner membrane. In Shigella flexneri, this protein is Putative multidrug resistance protein MdtD.